Consider the following 139-residue polypeptide: Growth factor (139 aa).

Positions 1 to 19 are cleaved as a signal peptide; it reads MSMKYLMLLFATMIIRSFA. The N-linked (GlcNAc...) asparagine; by host glycan is linked to N34. The region spanning 41–81 is the EGF-like domain; sequence AIRLCGPEGDGYCLHGDCIHARDINGMYCRCSHGYTGIRCQ. Intrachain disulfides connect C45–C58, C53–C69, and C71–C80. N-linked (GlcNAc...) asparagine; by host glycosylation is present at N95.

Belongs to the orthopoxvirus OPG019 family.

Its subcellular location is the secreted. Its function is as follows. Stimulates cellular proliferation (hyperplasia)and mobility around infected cells to promote rapid and efficient spread of infection. The protein is Growth factor (OPG019) of Camelus.